We begin with the raw amino-acid sequence, 425 residues long: Serine--tRNA ligase (425 aa).

Residue 233-235 participates in L-serine binding; sequence TAE. 264-266 lines the ATP pocket; that stretch reads RRE. Residue Glu287 participates in L-serine binding. 351-354 contacts ATP; that stretch reads EISS. Ser387 contributes to the L-serine binding site.

This sequence belongs to the class-II aminoacyl-tRNA synthetase family. Type-1 seryl-tRNA synthetase subfamily. Homodimer. The tRNA molecule binds across the dimer.

It localises to the cytoplasm. It carries out the reaction tRNA(Ser) + L-serine + ATP = L-seryl-tRNA(Ser) + AMP + diphosphate + H(+). The catalysed reaction is tRNA(Sec) + L-serine + ATP = L-seryl-tRNA(Sec) + AMP + diphosphate + H(+). Its pathway is aminoacyl-tRNA biosynthesis; selenocysteinyl-tRNA(Sec) biosynthesis; L-seryl-tRNA(Sec) from L-serine and tRNA(Sec): step 1/1. Catalyzes the attachment of serine to tRNA(Ser). Is also able to aminoacylate tRNA(Sec) with serine, to form the misacylated tRNA L-seryl-tRNA(Sec), which will be further converted into selenocysteinyl-tRNA(Sec). The polypeptide is Serine--tRNA ligase (Thermotoga maritima (strain ATCC 43589 / DSM 3109 / JCM 10099 / NBRC 100826 / MSB8)).